The sequence spans 606 residues: NADH-ubiquinone oxidoreductase chain 5 (606 aa).

The next 16 membrane-spanning stretches (helical) occupy residues 3–23 (LFTS…LMSL), 35–55 (YVKT…LIFI), 87–107 (MIFT…SMWY), 117–137 (FFKY…ANNL), 140–160 (LFIG…WWYG), 171–191 (AILY…WFLF), 211–233 (LPLL…HPWL), 241–261 (TPVS…FLLI), 273–293 (MQTL…ICAL), 301–320 (IIAF…IGIN), 325–347 (AFLH…GSII), 366–386 (LPFT…TPFL), 402–422 (SYTN…TAVY), 457–477 (LLIG…PMTI), 488–508 (LTAL…SLMT), and 582–602 (GLIK…MLLF).

Belongs to the complex I subunit 5 family. Core subunit of respiratory chain NADH dehydrogenase (Complex I) which is composed of 45 different subunits.

The protein resides in the mitochondrion inner membrane. The enzyme catalyses a ubiquinone + NADH + 5 H(+)(in) = a ubiquinol + NAD(+) + 4 H(+)(out). In terms of biological role, core subunit of the mitochondrial membrane respiratory chain NADH dehydrogenase (Complex I) which catalyzes electron transfer from NADH through the respiratory chain, using ubiquinone as an electron acceptor. Essential for the catalytic activity and assembly of complex I. The chain is NADH-ubiquinone oxidoreductase chain 5 (MT-ND5) from Pseudosoriculus fumidus (Taiwanese brown-toothed shrew).